Reading from the N-terminus, the 208-residue chain is Segregation and condensation protein B (208 aa).

This sequence belongs to the ScpB family. In terms of assembly, homodimer. Homodimerization may be required to stabilize the binding of ScpA to the Smc head domains. Component of a cohesin-like complex composed of ScpA, ScpB and the Smc homodimer, in which ScpA and ScpB bind to the head domain of Smc. The presence of the three proteins is required for the association of the complex with DNA.

It localises to the cytoplasm. Participates in chromosomal partition during cell division. May act via the formation of a condensin-like complex containing Smc and ScpA that pull DNA away from mid-cell into both cell halves. The sequence is that of Segregation and condensation protein B from Mycoplasma pneumoniae (strain ATCC 29342 / M129 / Subtype 1) (Mycoplasmoides pneumoniae).